The chain runs to 226 residues: tRNA (guanine-N(1)-)-methyltransferase (226 aa).

Residues glycine 110 and 130–135 contribute to the S-adenosyl-L-methionine site; that span reads IGDFIL.

It belongs to the RNA methyltransferase TrmD family. As to quaternary structure, homodimer.

It is found in the cytoplasm. The catalysed reaction is guanosine(37) in tRNA + S-adenosyl-L-methionine = N(1)-methylguanosine(37) in tRNA + S-adenosyl-L-homocysteine + H(+). Specifically methylates guanosine-37 in various tRNAs. In Nitratiruptor sp. (strain SB155-2), this protein is tRNA (guanine-N(1)-)-methyltransferase.